A 20-amino-acid chain; its full sequence is Short cationic peptide-4b (20 aa).

Glu20 carries the glutamic acid 1-amide modification.

Expressed by the venom gland.

The protein localises to the secreted. The polypeptide is Short cationic peptide-4b (Cupiennius salei (American wandering spider)).